The primary structure comprises 82 residues: MSEEKFPERPGEPECSYYLRTGNCYLKQNCKYHHPKNITPSEPQCTLNDKGLPLRPGQAICPHYSRFGICRSGPTCKFDHFT.

2 consecutive C3H1-type zinc fingers follow at residues 9–37 (RPGE…HPKN) and 55–82 (RPGQ…DHFT).

The sequence is that of Zinc finger CCCH domain-containing protein 13 from Arabidopsis thaliana (Mouse-ear cress).